We begin with the raw amino-acid sequence, 397 residues long: MKVIDGTIASPLGFSADGLHAGFKKRKMDFGWIVSEKPASVAGVYTTNKVIAAPLIVTKTSVKKAGKMRAIVVNSGVANSCTGTQGLEDAYTMQEWTAEKLGVEPDMIGVASTGIIGELLPMDTLKNGLSKLVVNGNANDFAKAILTTDTATKTIAVTETFGRDVVTMAGVAKGSGMIHPNMATMLGFITCDANISSDTLQLALSQNVEKTFNQITVDGDTSTNDMVLVMSNGCALNDEILPDTPEFDKFSKMLNFVMQELAKKIAKDGEGANKLIQVDVVNAPNALDARMMAKSVVGSSLVKTAIFGEDPNWGRILAAVGYAGVDVPVDNVDIMLGGLPVMLASSPVTFDDEEMKDIMHGDEVTITVDLHSGQEKGTAWGCDLSYDYVKINALYHT.

The substrate site is built by Thr147, Lys173, Thr184, Glu270, Asn392, and Thr397. Residue Thr184 is the Nucleophile of the active site.

Belongs to the ArgJ family. Heterotetramer of two alpha and two beta chains.

Its subcellular location is the cytoplasm. It carries out the reaction N(2)-acetyl-L-ornithine + L-glutamate = N-acetyl-L-glutamate + L-ornithine. The enzyme catalyses L-glutamate + acetyl-CoA = N-acetyl-L-glutamate + CoA + H(+). Its pathway is amino-acid biosynthesis; L-arginine biosynthesis; L-ornithine and N-acetyl-L-glutamate from L-glutamate and N(2)-acetyl-L-ornithine (cyclic): step 1/1. It functions in the pathway amino-acid biosynthesis; L-arginine biosynthesis; N(2)-acetyl-L-ornithine from L-glutamate: step 1/4. In terms of biological role, catalyzes two activities which are involved in the cyclic version of arginine biosynthesis: the synthesis of N-acetylglutamate from glutamate and acetyl-CoA as the acetyl donor, and of ornithine by transacetylation between N(2)-acetylornithine and glutamate. The chain is Arginine biosynthesis bifunctional protein ArgJ from Streptococcus thermophilus (strain CNRZ 1066).